The following is a 247-amino-acid chain: ATP synthase subunit a, chloroplastic (247 aa).

5 consecutive transmembrane segments (helical) span residues 38–58 (QVLI…SIAV), 95–115 (VPFI…GALL), 134–154 (INTT…AGLS), 199–219 (LVVV…VMFL), and 220–240 (GLFT…AYIG).

It belongs to the ATPase A chain family. In terms of assembly, F-type ATPases have 2 components, CF(1) - the catalytic core - and CF(0) - the membrane proton channel. CF(1) has five subunits: alpha(3), beta(3), gamma(1), delta(1), epsilon(1). CF(0) has four main subunits: a, b, b' and c.

It is found in the plastid. It localises to the chloroplast thylakoid membrane. Key component of the proton channel; it plays a direct role in the translocation of protons across the membrane. In Oenothera argillicola (Appalachian evening primrose), this protein is ATP synthase subunit a, chloroplastic.